Reading from the N-terminus, the 103-residue chain is Co-chaperonin GroES (103 aa).

The protein belongs to the GroES chaperonin family. In terms of assembly, heptamer of 7 subunits arranged in a ring. Interacts with the chaperonin GroEL.

It localises to the cytoplasm. Functionally, together with the chaperonin GroEL, plays an essential role in assisting protein folding. The GroEL-GroES system forms a nano-cage that allows encapsulation of the non-native substrate proteins and provides a physical environment optimized to promote and accelerate protein folding. GroES binds to the apical surface of the GroEL ring, thereby capping the opening of the GroEL channel. This is Co-chaperonin GroES from Prochlorococcus marinus (strain MIT 9215).